The following is a 439-amino-acid chain: GTPase Der (439 aa).

EngA-type G domains follow at residues 4–169 and 177–352; these read AMVS…PQEE and IKIA…EEYN. GTP-binding positions include 10-17, 57-61, 120-123, 183-190, 230-234, and 295-298; these read GRPNVGKS, DTGGL, NKVD, GKPNVGKS, DTAGI, and NKWD. Residues 353–437 form the KH-like domain; that stretch reads KRITTGLLNN…PIVISTKKRG (85 aa).

The protein belongs to the TRAFAC class TrmE-Era-EngA-EngB-Septin-like GTPase superfamily. EngA (Der) GTPase family. Associates with the 50S ribosomal subunit.

GTPase that plays an essential role in the late steps of ribosome biogenesis. In Thermoanaerobacter sp. (strain X514), this protein is GTPase Der.